We begin with the raw amino-acid sequence, 149 residues long: Peptide deformylase (149 aa).

Fe cation is bound by residues C92 and H134. The active site involves E135. Fe cation is bound at residue H138.

This sequence belongs to the polypeptide deformylase family. Fe(2+) serves as cofactor.

The catalysed reaction is N-terminal N-formyl-L-methionyl-[peptide] + H2O = N-terminal L-methionyl-[peptide] + formate. Removes the formyl group from the N-terminal Met of newly synthesized proteins. Requires at least a dipeptide for an efficient rate of reaction. N-terminal L-methionine is a prerequisite for activity but the enzyme has broad specificity at other positions. The protein is Peptide deformylase of Buchnera aphidicola subsp. Cinara cedri (strain Cc).